The sequence spans 387 residues: MSSIVPSMHNNRTIIIGIVAGEASGDILGAGLIRTLKKYLKKVRFFGIGGPCMQSEDMKSWYNIEELSVMGFAEIVMKLPRLLYIRRNLARRFINLKPDVFIGIDSPDFNISLENRLKKRGIRTIHYVSPSVWAWRKKRIFALKKATDNILVILPFEKKIYDHFNIPCQFIGHSLADQIPLNPNKVSARQKLGIPHDVYCLAVLPGSRIREIKMLAHDFLVCAKLLKNNFPNLEILVPLTNQTSIKKFISVASTSVKYRVLSNQSAWEIMMAADASLVTAGTATLECMLVKCPMVVAYRMHPLTFMLAKHFINIPWISLPNLLAGHELVKEFIQNNCRPENLAQTLINLLNNNNQHIVLKKKFRQLHHSIRCNADEQAAYAVLRLIK.

It belongs to the LpxB family.

The enzyme catalyses 2-N,3-O-bis[(3R)-3-hydroxytetradecanoyl]-alpha-D-glucosaminyl 1-phosphate + UDP-2-N,3-O-bis[(3R)-3-hydroxytetradecanoyl]-alpha-D-glucosamine = lipid A disaccharide (E. coli) + UDP + H(+). It catalyses the reaction a lipid X + a UDP-2-N,3-O-bis[(3R)-3-hydroxyacyl]-alpha-D-glucosamine = a lipid A disaccharide + UDP + H(+). It participates in glycolipid biosynthesis; lipid IV(A) biosynthesis; lipid IV(A) from (3R)-3-hydroxytetradecanoyl-[acyl-carrier-protein] and UDP-N-acetyl-alpha-D-glucosamine: step 5/6. Its function is as follows. Condensation of UDP-2,3-diacylglucosamine and 2,3-diacylglucosamine-1-phosphate to form lipid A disaccharide, a precursor of lipid A, a phosphorylated glycolipid that anchors the lipopolysaccharide to the outer membrane of the cell. The protein is Lipid-A-disaccharide synthase of Blochmanniella pennsylvanica (strain BPEN).